The following is a 490-amino-acid chain: Betaine aldehyde dehydrogenase (490 aa).

K(+) is bound by residues Thr-26, Ile-27, and Asp-93. Gly-150–Trp-152 is a binding site for NAD(+). The active-site Charge relay system is the Lys-162. Residue Lys-176 to Glu-179 participates in NAD(+) binding. Val-180 contributes to the K(+) binding site. Gly-230–Ser-233 provides a ligand contact to NAD(+). Leu-246 provides a ligand contact to K(+). Glu-252 (proton acceptor) is an active-site residue. 3 residues coordinate NAD(+): Gly-254, Cys-286, and Glu-387. Residue Cys-286 is the Nucleophile of the active site. Position 286 is a cysteine sulfenic acid (-SOH) (Cys-286). The K(+) site is built by Lys-457 and Gly-460. Catalysis depends on Glu-464, which acts as the Charge relay system.

This sequence belongs to the aldehyde dehydrogenase family. In terms of assembly, dimer of dimers. K(+) serves as cofactor.

It catalyses the reaction betaine aldehyde + NAD(+) + H2O = glycine betaine + NADH + 2 H(+). The protein operates within amine and polyamine biosynthesis; betaine biosynthesis via choline pathway; betaine from betaine aldehyde: step 1/1. Involved in the biosynthesis of the osmoprotectant glycine betaine. Catalyzes the irreversible oxidation of betaine aldehyde to the corresponding acid. This chain is Betaine aldehyde dehydrogenase, found in Escherichia coli O6:K15:H31 (strain 536 / UPEC).